The sequence spans 335 residues: MEKVLSVQNLHVSFTTYGGTVQAVRGVSFDLYKGETFAIVGESGCGKSVTSQSIMGLLPPYSAKVTDGRILFKNKDLCRLSDKEMRGIRGADISMIFQDPMTALNPTLTVGDQLGEALLRHKKMSKKAARKEVLSMLSLVGIPDPGERLKQYPHQFSGGMRQRIVIAMALICEPDILIADEPTTALDVTIQAQILELFKEIQRKTDVSVILITHDLGVVAQVADRVAVMYAGKMAEIGTRKDIFYQPQHPYTKGLLGSVPRLDLNGAELTPIDGTPPDLFSPPPGCPFAARCPNRMVVCDRVYPGQTIRSDSHTVNCWLQDQRAEHAVLSGDAKD.

An ABC transporter domain is found at 7-256 (VQNLHVSFTT…PQHPYTKGLL (250 aa)). An ATP-binding site is contributed by 41 to 48 (GESGCGKS).

Belongs to the ABC transporter superfamily.

It localises to the cell membrane. The catalysed reaction is a dipeptide(out) + ATP + H2O = a dipeptide(in) + ADP + phosphate + H(+). In terms of biological role, probably part of the ABC transporter DppBCDE involved in dipeptide transport. Responsible for energy coupling to the transport system. This is Dipeptide transport ATP-binding protein DppD (dppD) from Bacillus subtilis (strain 168).